A 184-amino-acid polypeptide reads, in one-letter code: Threonylcarbamoyl-AMP synthase (184 aa).

One can recognise a YrdC-like domain in the interval 1–184 (MNNLENIVEQ…IFTQHIFRQG (184 aa)).

It belongs to the SUA5 family. TsaC subfamily.

Its subcellular location is the cytoplasm. It carries out the reaction L-threonine + hydrogencarbonate + ATP = L-threonylcarbamoyladenylate + diphosphate + H2O. Required for the formation of a threonylcarbamoyl group on adenosine at position 37 (t(6)A37) in tRNAs that read codons beginning with adenine. Catalyzes the conversion of L-threonine, HCO(3)(-)/CO(2) and ATP to give threonylcarbamoyl-AMP (TC-AMP) as the acyladenylate intermediate, with the release of diphosphate. The protein is Threonylcarbamoyl-AMP synthase of Actinobacillus pleuropneumoniae serotype 7 (strain AP76).